A 147-amino-acid chain; its full sequence is Heavy metal-associated isoprenylated plant protein 27 (147 aa).

Positions 18-82 (FQKVEIKVKM…VMHRTGKKAE (65 aa)) constitute an HMA domain. A metal cation-binding residues include Cys29 and Cys32. Cys144 carries the cysteine methyl ester modification. Residue Cys144 is the site of S-farnesyl cysteine attachment. The propeptide at 145–147 (TIM) is removed in mature form.

It belongs to the HIPP family. Interacts with UBP16. Interacts with ZHD11/HB29.

Its subcellular location is the membrane. Functionally, heavy-metal-binding protein. Binds cadmium. May be involved in cadmium transport and play a role in cadmium detoxification. The chain is Heavy metal-associated isoprenylated plant protein 27 from Arabidopsis thaliana (Mouse-ear cress).